Reading from the N-terminus, the 643-residue chain is MSRPSTPLLDKAPTPDRLRALPEQDLPQLAEELRTELIDAVSTTGGHLGAGLGVVELTVALHHVFNTPYDRIIWDVGHQAYPHKILTGRRDRIRTLRQAGGLSGFTKRAESEYDPFGAAHSSTSISAGLGMAVASELSGEKRNVIAVIGDGSMSAGMAYEAMNNAGALDARLIVILNDNDMSIAPPTGAMSAYLARLVSGRTYRSVREAAKQVAQKLPKFLQDKARKSEEYARAFFTGGTLFEELGFYYVGPIDGHNLDHLLPVLKNVRDTQKGPVLIHVVTQKGKGYAPAEAAADKYHGVNKFDVITGKQAKPPANAPSYTKIFGTSLIEEARHDDKIVAVTAAMPTGTGLDLFGEAFPKRVFDVGIAEQHAVTFAAGLASEGYKPFCAIYSTFLQRGYDQVVHDVSIQNLPVRFPIDRAGLVGADGPTHAGSFDTGFLAALPGFVVMAASDEAELRHMVRTAAEYDEGPISFRYPRGDGVGVDLPERGSVLEIGKGRIVREGTKVALLSFGTRLQECLAAAEELGAAGLSTTVADARFAKPLDHDLIRRLVREHEVLVMVEEGAVGGFSSHVLQFLATDGLLDRGLKVRALMLPDIYQDHGKPDAMYAEAGLDRTGIVRTVFAALHRDELGHEALPTPFRA.

Residues His78 and 119–121 (AHS) each bind thiamine diphosphate. Mg(2+) is bound at residue Asp150. Thiamine diphosphate contacts are provided by residues 151–152 (GS), Asn179, Tyr288, and Glu370. Asn179 contacts Mg(2+).

Belongs to the transketolase family. DXPS subfamily. In terms of assembly, homodimer. Mg(2+) is required as a cofactor. The cofactor is thiamine diphosphate.

The catalysed reaction is D-glyceraldehyde 3-phosphate + pyruvate + H(+) = 1-deoxy-D-xylulose 5-phosphate + CO2. The protein operates within metabolic intermediate biosynthesis; 1-deoxy-D-xylulose 5-phosphate biosynthesis; 1-deoxy-D-xylulose 5-phosphate from D-glyceraldehyde 3-phosphate and pyruvate: step 1/1. In terms of biological role, catalyzes the acyloin condensation reaction between C atoms 2 and 3 of pyruvate and glyceraldehyde 3-phosphate to yield 1-deoxy-D-xylulose-5-phosphate (DXP). The polypeptide is 1-deoxy-D-xylulose-5-phosphate synthase (Brucella abortus (strain 2308)).